A 1070-amino-acid polypeptide reads, in one-letter code: DNA-directed RNA polymerase subunit beta (1070 aa).

Belongs to the RNA polymerase beta chain family. In plastids the minimal PEP RNA polymerase catalytic core is composed of four subunits: alpha, beta, beta', and beta''. When a (nuclear-encoded) sigma factor is associated with the core the holoenzyme is formed, which can initiate transcription.

Its subcellular location is the plastid. The protein localises to the chloroplast. It catalyses the reaction RNA(n) + a ribonucleoside 5'-triphosphate = RNA(n+1) + diphosphate. Its function is as follows. DNA-dependent RNA polymerase catalyzes the transcription of DNA into RNA using the four ribonucleoside triphosphates as substrates. This is DNA-directed RNA polymerase subunit beta from Phaseolus vulgaris (Kidney bean).